Here is a 264-residue protein sequence, read N- to C-terminus: Orotidine 5'-phosphate decarboxylase (264 aa).

Substrate-binding positions include Asp40, 62–64 (KTH), 93–102 (DRKFADIGNT), Tyr214, and Arg233. Lys95 acts as the Proton donor in catalysis.

It belongs to the OMP decarboxylase family.

It catalyses the reaction orotidine 5'-phosphate + H(+) = UMP + CO2. It participates in pyrimidine metabolism; UMP biosynthesis via de novo pathway; UMP from orotate: step 2/2. The polypeptide is Orotidine 5'-phosphate decarboxylase (ura4) (Schizosaccharomyces pombe (strain 972 / ATCC 24843) (Fission yeast)).